We begin with the raw amino-acid sequence, 370 residues long: Protein SHI RELATED SEQUENCE 1 (370 aa).

Residues 1 to 37 (MAGFFSLDGGGGGGGGGGNNQEDHRSNTNPPPPVSEA) are disordered. Gly residues predominate over residues 8 to 19 (DGGGGGGGGGGN). The Zn(2+) site is built by Cys-144, Cys-147, Cys-155, Cys-160, Cys-164, and Cys-171. A DNA-binding region (zn(2)-C6 fungal-type; degenerate) is located at residues 144-171 (CQDCGNQAKKDCSHMRCRTCCKSRGFEC). Positions 271–274 (IGGH) match the Required for homo- and heterodimerization motif.

Belongs to the SHI protein family. As to quaternary structure, forms homodimers and heterodimers with LRP1. In terms of tissue distribution, expressed in flowers, seeds and seedlings.

Its subcellular location is the nucleus. Its function is as follows. Transcription activator that binds DNA on 5'-ACTCTAC-3' and promotes auxin homeostasis-regulating gene expression (e.g. YUC genes), as well as genes affecting stamen development, cell expansion and timing of flowering. Synergistically with other SHI-related proteins, regulates gynoecium, stamen and leaf development in a dose-dependent manner, controlling apical-basal patterning. Promotes style and stigma formation, and influences vascular development during gynoecium development. May also have a role in the formation and/or maintenance of the shoot apical meristem (SAM). This Arabidopsis thaliana (Mouse-ear cress) protein is Protein SHI RELATED SEQUENCE 1 (SRS1).